A 1099-amino-acid polypeptide reads, in one-letter code: Transmembrane protein 132D (1099 aa).

An N-terminal signal peptide occupies residues 1–30 (MCPSEMGTLWHHWSPVLISLAALFSKVTEG). The Extracellular segment spans residues 31–915 (RGILESIQRF…LMQASKGLSD (885 aa)). Asparagine 505 carries an N-linked (GlcNAc...) asparagine glycan. The segment at 797–858 (FGQNDANPNT…LMEGRGTTTD (62 aa)) is disordered. Positions 835–848 (GSQEGQYYGSSSMG) are enriched in low complexity. A helical membrane pass occupies residues 916-936 (LEIGMYALLGVFCLAILVFLI). Topologically, residues 937-1099 (NCVTFALKYR…NYMERLHENV (163 aa)) are cytoplasmic.

It belongs to the TMEM132 family. As to quaternary structure, interacts (via C-terminus) with NCKAP. Expressed in mature oligodendrocytes. Detected in the brain, lung, pancreas and testis. Highly expressed in mature neurons of the adult nervous system.

Its subcellular location is the membrane. Its function is as follows. Regulate neuronals morphology via inhibition of the WAVE regulatory complex (WCR), a complex that controls F-actin cytoskeletal dynamics. The polypeptide is Transmembrane protein 132D (Homo sapiens (Human)).